A 477-amino-acid chain; its full sequence is Glycogen synthase (477 aa).

ADP-alpha-D-glucose is bound at residue lysine 15.

Belongs to the glycosyltransferase 1 family. Bacterial/plant glycogen synthase subfamily.

It catalyses the reaction [(1-&gt;4)-alpha-D-glucosyl](n) + ADP-alpha-D-glucose = [(1-&gt;4)-alpha-D-glucosyl](n+1) + ADP + H(+). It functions in the pathway glycan biosynthesis; glycogen biosynthesis. Its function is as follows. Synthesizes alpha-1,4-glucan chains using ADP-glucose. This chain is Glycogen synthase, found in Streptococcus pneumoniae serotype 19F (strain G54).